A 74-amino-acid polypeptide reads, in one-letter code: MANLKFLLCLFLICVSLSRSSASRPMFPNADGIKRGRMMIEAEEVLKASMEKLMERGFNESMRLSPGGPDPRHH.

The N-terminal stretch at 1 to 22 is a signal peptide; the sequence is MANLKFLLCLFLICVSLSRSSA. A glycan (N-linked (GlcNAc...) asparagine) is linked at Asn59. Hydroxyproline is present on residues Pro66 and Pro69. Residue Pro69 is glycosylated (O-linked (Ara...) hydroxyproline).

The protein belongs to the CLV3/ESR signal peptide family. The O-glycosylation (arabinosylation) of the hydroxyproline Pro-69 enhances binding affinity of the CLE1p peptide for its receptor. As to expression, mostly expressed in roots and seedlings, and, to a lower extent, in stems and apex.

Its subcellular location is the secreted. The protein localises to the extracellular space. Functionally, extracellular signal peptide that regulates cell fate. The chain is CLAVATA3/ESR (CLE)-related protein 1 from Arabidopsis thaliana (Mouse-ear cress).